A 72-amino-acid polypeptide reads, in one-letter code: UPF0154 protein LBA1278 (72 aa).

Residues 3–23 (LGLAIFLIIIALLVGATAGFY) traverse the membrane as a helical segment.

It belongs to the UPF0154 family.

It localises to the cell membrane. This Lactobacillus acidophilus (strain ATCC 700396 / NCK56 / N2 / NCFM) protein is UPF0154 protein LBA1278.